Consider the following 194-residue polypeptide: WASH complex subunit 3 (194 aa).

An N-acetylmethionine modification is found at methionine 1. Residues 46-74 (TVCEEKLADLSLRIQQIETTLNILDAKLS) adopt a coiled-coil conformation. Disordered regions lie at residues 93–121 (SVTNGAHPEATSEQPQQNSTQDSGLQESE) and 159–194 (EGLDPDLLERPDAPVPDGESEKTVEESSDSESSFSD). Over residues 103–121 (TSEQPQQNSTQDSGLQESE) the composition is skewed to polar residues.

This sequence belongs to the CCDC53 family. Component of the WASH core complex also described as WASH regulatory complex (SHRC) composed of WASH (WASHC1, WASH2P or WASH3P), WASHC2 (WASHC2A or WASHC2C), WASHC3, WASHC4 and WASHC5. The WASH core complex associates via WASHC2 with the F-actin-capping protein dimer (formed by CAPZA1, CAPZA2 or CAPZA3 and CAPZB) in a transient or substoichiometric manner which was initially described as WASH complex.

It is found in the early endosome. Functionally, acts as a component of the WASH core complex that functions as a nucleation-promoting factor (NPF) at the surface of endosomes, where it recruits and activates the Arp2/3 complex to induce actin polymerization, playing a key role in the fission of tubules that serve as transport intermediates during endosome sorting. The chain is WASH complex subunit 3 from Homo sapiens (Human).